A 257-amino-acid polypeptide reads, in one-letter code: uncharacterized protein (257 aa).

Residues 6-26 form a helical membrane-spanning segment; sequence IFWLNLAAIIIISIVVSGDMF.

Belongs to the staphylococcal tandem lipoprotein family.

The protein localises to the cell membrane. This is an uncharacterized protein from Staphylococcus aureus (strain COL).